Reading from the N-terminus, the 230-residue chain is Demethylmenaquinone methyltransferase (230 aa).

Residues T62, D80, D100–A101, and S117 each bind S-adenosyl-L-methionine.

The protein belongs to the class I-like SAM-binding methyltransferase superfamily. MenG/UbiE family.

The catalysed reaction is a 2-demethylmenaquinol + S-adenosyl-L-methionine = a menaquinol + S-adenosyl-L-homocysteine + H(+). It functions in the pathway quinol/quinone metabolism; menaquinone biosynthesis; menaquinol from 1,4-dihydroxy-2-naphthoate: step 2/2. Methyltransferase required for the conversion of demethylmenaquinol (DMKH2) to menaquinol (MKH2). In Mycobacterium sp. (strain KMS), this protein is Demethylmenaquinone methyltransferase.